A 122-amino-acid polypeptide reads, in one-letter code: MIQQETRLKVADNSGAREVLTIKVLGGSGRKTANIGDIIVCTVKNATPGGVVKKGDVVKAVVVRTKSGVRREDGSYIKFDENACVIIRDDKGPRGTRIFGPVARELREGNFMKIVSLAPEVL.

This sequence belongs to the universal ribosomal protein uL14 family. As to quaternary structure, part of the 50S ribosomal subunit. Forms a cluster with proteins L3 and L19. In the 70S ribosome, L14 and L19 interact and together make contacts with the 16S rRNA in bridges B5 and B8.

In terms of biological role, binds to 23S rRNA. Forms part of two intersubunit bridges in the 70S ribosome. The polypeptide is Large ribosomal subunit protein uL14 (Staphylococcus epidermidis (strain ATCC 35984 / DSM 28319 / BCRC 17069 / CCUG 31568 / BM 3577 / RP62A)).